The chain runs to 503 residues: UDP-N-acetylmuramoylalanine--D-glutamate ligase (503 aa).

An ATP-binding site is contributed by 129-135 (GTNGKTT). Residues 284-305 (DSEAEGEGKPRRRKADATAQEA) are disordered.

It belongs to the MurCDEF family.

The protein resides in the cytoplasm. It catalyses the reaction UDP-N-acetyl-alpha-D-muramoyl-L-alanine + D-glutamate + ATP = UDP-N-acetyl-alpha-D-muramoyl-L-alanyl-D-glutamate + ADP + phosphate + H(+). Its pathway is cell wall biogenesis; peptidoglycan biosynthesis. Functionally, cell wall formation. Catalyzes the addition of glutamate to the nucleotide precursor UDP-N-acetylmuramoyl-L-alanine (UMA). This chain is UDP-N-acetylmuramoylalanine--D-glutamate ligase, found in Cupriavidus pinatubonensis (strain JMP 134 / LMG 1197) (Cupriavidus necator (strain JMP 134)).